The following is a 177-amino-acid chain: MIRPILKMGDSRLLRVAKPVQRFQTPELTALIEDMFDTMDAARGAGLAAPQIGVDLQVVIFGFDRNDRYPDAPAVPKTVLINPTIEPLSDAMEDGWEGCLSVPGLRGVVPRYTRLRYTGYDQHGHAIDRIAEGFHARVVQHECDHLQGILYPMRVQDFTRFGFTEILFPELPAHHND.

Cys99 and His141 together coordinate Fe cation. Glu142 is an active-site residue. Residue His145 coordinates Fe cation.

This sequence belongs to the polypeptide deformylase family. Requires Fe(2+) as cofactor.

It carries out the reaction N-terminal N-formyl-L-methionyl-[peptide] + H2O = N-terminal L-methionyl-[peptide] + formate. Its function is as follows. Removes the formyl group from the N-terminal Met of newly synthesized proteins. Requires at least a dipeptide for an efficient rate of reaction. N-terminal L-methionine is a prerequisite for activity but the enzyme has broad specificity at other positions. The polypeptide is Peptide deformylase 2 (Ralstonia nicotianae (strain ATCC BAA-1114 / GMI1000) (Ralstonia solanacearum)).